The primary structure comprises 325 residues: MAAMRKAVPRRLVGLASLRAVSTSSMGTLPKRVKIVEVGPRDGLQNEKNIVSTPVKIKLIDMLSEAGLSVIETTSFVSPKWVPQMGDHTEVLKGIQKFPGINYPVLTPNLKGFEAAVAAGAKEVAIFGAASELFTKKNINCSIEESFQRFDAILKAAQSANISVRGYVSCALGCPYEGKISPAKVAEVTKKLYSMGCYEISLGDTIGVGTPGIMKGMLSAVMQEVPLAALAVHCHDTYGQALANTLMALQMGVSVVDSSVAGLGGCPYAQGASGNLATEDLVYMLEGLGIHTGVNLQKLLEAGNFICQALNRKTSSKVAQATCKL.

Residues 1–27 (MAAMRKAVPRRLVGLASLRAVSTSSMG) constitute a mitochondrion transit peptide. The region spanning 33–300 (VKIVEVGPRD…HTGVNLQKLL (268 aa)) is the Pyruvate carboxyltransferase domain. Arginine 41 serves as a coordination point for substrate. Aspartate 42 contacts a divalent metal cation. Residue lysine 48 is modified to N6-acetyllysine; alternate. Lysine 48 carries the N6-succinyllysine; alternate modification. An N6-acetyllysine modification is found at lysine 111. Lysine 137 and lysine 179 each carry N6-acetyllysine; alternate. N6-succinyllysine; alternate occurs at positions 137 and 179. A divalent metal cation-binding residues include histidine 233 and histidine 235. Residue cysteine 266 is part of the active site. A divalent metal cation is bound at residue asparagine 275. A Microbody targeting signal motif is present at residues 323–325 (CKL). N6-acetyllysine is present on lysine 324.

The protein belongs to the HMG-CoA lyase family. Homodimer; disulfide-linked. Can also form homotetramers.

The protein localises to the mitochondrion matrix. Its subcellular location is the peroxisome. The catalysed reaction is (3S)-3-hydroxy-3-methylglutaryl-CoA = acetoacetate + acetyl-CoA. It functions in the pathway metabolic intermediate metabolism; (S)-3-hydroxy-3-methylglutaryl-CoA degradation; acetoacetate from (S)-3-hydroxy-3-methylglutaryl-CoA: step 1/1. In terms of biological role, mitochondrial 3-hydroxy-3-methylglutaryl-CoA lyase that catalyzes a cation-dependent cleavage of (S)-3-hydroxy-3-methylglutaryl-CoA into acetyl-CoA and acetoacetate, a key step in ketogenesis. Terminal step in leucine catabolism. Ketone bodies (beta-hydroxybutyrate, acetoacetate and acetone) are essential as an alternative source of energy to glucose, as lipid precursors and as regulators of metabolism. This is Hydroxymethylglutaryl-CoA lyase, mitochondrial (HMGCL) from Pongo abelii (Sumatran orangutan).